Consider the following 442-residue polypeptide: Chaperone protein dnaJ A6, chloroplastic (442 aa).

The N-terminal 82 residues, 1 to 82 (MAIIQLGSTC…PRRGSRFTVR (82 aa)), are a transit peptide targeting the chloroplast. In terms of domain architecture, J spans 86-150 (DYYSVLGVSK…EKKSLYDRYG (65 aa)). The CR-type zinc-finger motif lies at 211–292 (GMEKEIEISR…CSGDGRVRKT (82 aa)). Zn(2+) contacts are provided by Cys224, Cys227, Cys241, Cys244, Cys267, Cys270, Cys280, and Cys283. CXXCXGXG motif repeat units lie at residues 224–231 (CGTCEGSG), 241–248 (CTTCGGQG), 267–274 (CSSCNGTG), and 280–287 (CGTCSGDG).

Belongs to the DnaJ family.

It is found in the plastid. The protein resides in the chloroplast. In terms of biological role, may function together with HSC70 chaperone to assist protein folding and prevent protein aggregation during heat stress in the chloroplast. This Arabidopsis thaliana (Mouse-ear cress) protein is Chaperone protein dnaJ A6, chloroplastic.